The sequence spans 147 residues: Deoxyuridine 5'-triphosphate nucleotidohydrolase (147 aa).

Substrate-binding positions include 67 to 69, Asn-80, and 84 to 86; these read RSG and TID.

The protein belongs to the dUTPase family. The cofactor is Mg(2+).

The catalysed reaction is dUTP + H2O = dUMP + diphosphate + H(+). The protein operates within pyrimidine metabolism; dUMP biosynthesis; dUMP from dCTP (dUTP route): step 2/2. This enzyme is involved in nucleotide metabolism: it produces dUMP, the immediate precursor of thymidine nucleotides and it decreases the intracellular concentration of dUTP so that uracil cannot be incorporated into DNA. In Syntrophotalea carbinolica (strain DSM 2380 / NBRC 103641 / GraBd1) (Pelobacter carbinolicus), this protein is Deoxyuridine 5'-triphosphate nucleotidohydrolase.